A 149-amino-acid polypeptide reads, in one-letter code: Large ribosomal subunit protein bL9 (149 aa).

This sequence belongs to the bacterial ribosomal protein bL9 family.

Functionally, binds to the 23S rRNA. This chain is Large ribosomal subunit protein bL9, found in Dichelobacter nodosus (strain VCS1703A).